The sequence spans 351 residues: uncharacterized protein (351 aa).

The HTH lacI-type domain occupies 14-69; it reads PRLADIAAQAQVSEATASRVLNGRPASRXSTRQRVLAALDLLGYERPTRLRRRSAG. Positions 16–35 form a DNA-binding region, H-T-H motif; the sequence is LADIAAQAQVSEATASRVLN.

In terms of biological role, putative sugar-binding regulatory protein for the alpha-amylase gene. This is an uncharacterized protein from Streptomyces limosus (Streptomyces albidoflavus).